We begin with the raw amino-acid sequence, 478 residues long: NAD-dependent malic enzyme (478 aa).

The ACT domain maps to 12-86 (TIRLQFEKDI…GVKIVNVSDR (75 aa)). Tyrosine 114 serves as the catalytic Proton donor. The active-site Proton acceptor is the lysine 169. Residues glutamate 211, aspartate 212, and aspartate 237 each coordinate a divalent metal cation. NAD(+) contacts are provided by residues 270–273 (IGAA), asparagine 363, and asparagine 393.

The protein belongs to the malic enzymes family. Homotetramer. The cofactor is Mg(2+). Mn(2+) serves as cofactor.

The enzyme catalyses (S)-malate + NAD(+) = pyruvate + CO2 + NADH. The catalysed reaction is oxaloacetate + H(+) = pyruvate + CO2. Its activity is regulated as follows. The activity is enhanced 5-7 times by ammonium and potassium. Its function is as follows. In addition to the NAD-dependent oxidative decarboxylation of L-malate, the enzyme catalyzes the decarboxylation of oxaloacetate. This Geobacillus stearothermophilus (Bacillus stearothermophilus) protein is NAD-dependent malic enzyme.